The primary structure comprises 205 residues: Holliday junction branch migration complex subunit RuvA (205 aa).

Positions 1-64 (MIGKLKGVVD…EDMIRLYGFR (64 aa)) are domain I. The interval 65 to 143 (SDAEREWFRL…AFAPVDPALV (79 aa)) is domain II. The tract at residues 144-152 (RLAGAVEAR) is flexible linker. Positions 153-205 (TAPQPVADAISALVNLGYPQAQASAAVAAALQSAGAEAEAKTLIRLGLRELAR) are domain III.

The protein belongs to the RuvA family. Homotetramer. Forms an RuvA(8)-RuvB(12)-Holliday junction (HJ) complex. HJ DNA is sandwiched between 2 RuvA tetramers; dsDNA enters through RuvA and exits via RuvB. An RuvB hexamer assembles on each DNA strand where it exits the tetramer. Each RuvB hexamer is contacted by two RuvA subunits (via domain III) on 2 adjacent RuvB subunits; this complex drives branch migration. In the full resolvosome a probable DNA-RuvA(4)-RuvB(12)-RuvC(2) complex forms which resolves the HJ.

The protein localises to the cytoplasm. Its function is as follows. The RuvA-RuvB-RuvC complex processes Holliday junction (HJ) DNA during genetic recombination and DNA repair, while the RuvA-RuvB complex plays an important role in the rescue of blocked DNA replication forks via replication fork reversal (RFR). RuvA specifically binds to HJ cruciform DNA, conferring on it an open structure. The RuvB hexamer acts as an ATP-dependent pump, pulling dsDNA into and through the RuvAB complex. HJ branch migration allows RuvC to scan DNA until it finds its consensus sequence, where it cleaves and resolves the cruciform DNA. The polypeptide is Holliday junction branch migration complex subunit RuvA (Methylobacterium sp. (strain 4-46)).